Here is a 215-residue protein sequence, read N- to C-terminus: Fibrillarin-like rRNA/tRNA 2'-O-methyltransferase (215 aa).

Residues 1–29 (MKASSSLPDGVQRRQFDNRSRLTTHGTTV) form a disordered region. A compositionally biased stretch (basic and acidic residues) spans 11 to 20 (VQRRQFDNRS). Residues 76-77 (TT), 92-93 (EF), 117-118 (DA), and 138-141 (DVAT) contribute to the S-adenosyl-L-methionine site.

Belongs to the methyltransferase superfamily. Fibrillarin family. Interacts with nop5. Component of box C/D small ribonucleoprotein (sRNP) particles that contain rpl7ae, FlpA and nop5, plus a guide RNA.

Functionally, involved in pre-rRNA and tRNA processing. Utilizes the methyl donor S-adenosyl-L-methionine to catalyze the site-specific 2'-hydroxyl methylation of ribose moieties in rRNA and tRNA. Site specificity is provided by a guide RNA that base pairs with the substrate. Methylation occurs at a characteristic distance from the sequence involved in base pairing with the guide RNA. The polypeptide is Fibrillarin-like rRNA/tRNA 2'-O-methyltransferase (Haloquadratum walsbyi (strain DSM 16790 / HBSQ001)).